The following is a 122-amino-acid chain: N(2)-fixation sustaining protein CowN (122 aa).

The protein belongs to the CowN family.

Is required to sustain N(2)-dependent growth in the presence of low levels of carbon monoxide (CO). Probably acts by protecting the N(2) fixation ability of the nitrogenase complex, which is inactivated in the presence of CO. The chain is N(2)-fixation sustaining protein CowN from Azorhizobium caulinodans (strain ATCC 43989 / DSM 5975 / JCM 20966 / LMG 6465 / NBRC 14845 / NCIMB 13405 / ORS 571).